Reading from the N-terminus, the 178-residue chain is Large ribosomal subunit protein uL6 (178 aa).

The protein belongs to the universal ribosomal protein uL6 family. In terms of assembly, part of the 50S ribosomal subunit.

Its function is as follows. This protein binds to the 23S rRNA, and is important in its secondary structure. It is located near the subunit interface in the base of the L7/L12 stalk, and near the tRNA binding site of the peptidyltransferase center. The chain is Large ribosomal subunit protein uL6 from Listeria innocua serovar 6a (strain ATCC BAA-680 / CLIP 11262).